The following is a 232-amino-acid chain: Charged multivesicular body protein 4c (232 aa).

Disordered stretches follow at residues 1–23 and 177–232; these read MSKL…PSAQ and NKKM…AWAT. The tract at residues 1 to 153 is intramolecular interaction with C-terminus; the sequence is MSKLGKFFKG…EISEAFSQRV (153 aa). 2 coiled-coil regions span residues 21 to 45 and 125 to 185; these read SAQE…YLEN and LNKI…SLEL. Residues 154-232 are intramolecular interaction with N-terminus; it reads QFADGFDEAE…DFKQLAAWAT (79 aa). Phosphoserine; by AURKB is present on Ser-210.

This sequence belongs to the SNF7 family. Probable core component of the endosomal sorting required for transport complex III (ESCRT-III). ESCRT-III components are thought to multimerize to form a flat lattice on the perimeter membrane of the endosome. Several assembly forms of ESCRT-III may exist that interact and act sequentially. Self-associates. Interacts with CHMP2A. Interacts with CHMP4A. Interacts with CHMP4B. Interacts with CHMP6. Interacts with VPS4A. Interacts with PDCD6IP; the interaction is direct. In terms of processing, phosphorylated at Ser-210 by AURKB during cytokinesis: together with ZFYVE19/ANCHR, phosphorylated CHMP4C retains abscission-competent VPS4 (VPS4A and/or VPS4B) at the midbody ring until abscission checkpoint signaling is terminated at late cytokinesis.

The protein resides in the cytoplasm. Its subcellular location is the cytosol. It localises to the late endosome membrane. The protein localises to the midbody. It is found in the midbody ring. Probable core component of the endosomal sorting required for transport complex III (ESCRT-III) which is involved in multivesicular bodies (MVBs) formation and sorting of endosomal cargo proteins into MVBs. MVBs contain intraluminal vesicles (ILVs) that are generated by invagination and scission from the limiting membrane of the endosome and mostly are delivered to lysosomes enabling degradation of membrane proteins, such as stimulated growth factor receptors, lysosomal enzymes and lipids. The MVB pathway appears to require the sequential function of ESCRT-O, -I,-II and -III complexes. ESCRT-III proteins mostly dissociate from the invaginating membrane before the ILV is released. The ESCRT machinery also functions in topologically equivalent membrane fission events, such as the terminal stages of cytokinesis. Key component of the cytokinesis checkpoint, a process required to delay abscission to prevent both premature resolution of intercellular chromosome bridges and accumulation of DNA damage: upon phosphorylation by AURKB, together with ZFYVE19/ANCHR, retains abscission-competent VPS4 (VPS4A and/or VPS4B) at the midbody ring until abscission checkpoint signaling is terminated at late cytokinesis. Deactivation of AURKB results in dephosphorylation of CHMP4C followed by its dissociation from ANCHR and VPS4 and subsequent abscission. ESCRT-III proteins are believed to mediate the necessary vesicle extrusion and/or membrane fission activities, possibly in conjunction with the AAA ATPase VPS4. CHMP4A/B/C are required for the exosomal release of SDCBP, CD63 and syndecan. The protein is Charged multivesicular body protein 4c (Chmp4c) of Mus musculus (Mouse).